The chain runs to 848 residues: Adenylate cyclase (848 aa).

The tract at residues 1–535 (MYLYIETLKQ…DVSHHFPLRL (535 aa)) is catalytic. Positions 541 to 848 (KALYSPCEIR…DAPLLQQYFS (308 aa)) are regulatory. A Phosphohistidine; by CRR modification is found at His-609.

Belongs to the adenylyl cyclase class-1 family.

Its subcellular location is the cytoplasm. It carries out the reaction ATP = 3',5'-cyclic AMP + diphosphate. The chain is Adenylate cyclase (cyaA) from Salmonella typhi.